Reading from the N-terminus, the 324-residue chain is Glyoxylate/hydroxypyruvate reductase B (324 aa).

Residues Arg-237 and Glu-266 contribute to the active site. The active-site Proton donor is the His-285.

This sequence belongs to the D-isomer specific 2-hydroxyacid dehydrogenase family. GhrB subfamily. As to quaternary structure, homodimer.

It localises to the cytoplasm. It catalyses the reaction glycolate + NADP(+) = glyoxylate + NADPH + H(+). The catalysed reaction is (R)-glycerate + NAD(+) = 3-hydroxypyruvate + NADH + H(+). The enzyme catalyses (R)-glycerate + NADP(+) = 3-hydroxypyruvate + NADPH + H(+). Catalyzes the NADPH-dependent reduction of glyoxylate and hydroxypyruvate into glycolate and glycerate, respectively. This is Glyoxylate/hydroxypyruvate reductase B from Cronobacter sakazakii (strain ATCC BAA-894) (Enterobacter sakazakii).